The sequence spans 157 residues: S-ribosylhomocysteine lyase (157 aa).

Residues histidine 54, histidine 58, and cysteine 124 each coordinate Fe cation.

It belongs to the LuxS family. In terms of assembly, homodimer. Requires Fe cation as cofactor.

The catalysed reaction is S-(5-deoxy-D-ribos-5-yl)-L-homocysteine = (S)-4,5-dihydroxypentane-2,3-dione + L-homocysteine. Involved in the synthesis of autoinducer 2 (AI-2) which is secreted by bacteria and is used to communicate both the cell density and the metabolic potential of the environment. The regulation of gene expression in response to changes in cell density is called quorum sensing. Catalyzes the transformation of S-ribosylhomocysteine (RHC) to homocysteine (HC) and 4,5-dihydroxy-2,3-pentadione (DPD). The polypeptide is S-ribosylhomocysteine lyase (Oenococcus oeni (strain ATCC BAA-331 / PSU-1)).